A 100-amino-acid chain; its full sequence is Nucleoid-associated protein HPSH_00175 (100 aa).

The protein belongs to the YbaB/EbfC family. Homodimer.

Its subcellular location is the cytoplasm. It localises to the nucleoid. In terms of biological role, binds to DNA and alters its conformation. May be involved in regulation of gene expression, nucleoid organization and DNA protection. This is Nucleoid-associated protein HPSH_00175 from Helicobacter pylori (strain Shi470).